The sequence spans 148 residues: MFDVTLLILLGLAALGFISHNTTVAVSILVLIIVRVTPLSTFFPWIEQQGLSIGIIILTIGVMAPIASGTLPPSTLIHSFLNWKSLVAIAVGVIVSWLGGRGVTLMGSQPQLVAGLLVGTVLGVALFRGVPVGPLIAAGLVSLIVGKQ.

The next 4 helical transmembrane spans lie at 14-34, 51-71, 86-106, and 121-141; these read ALGF…LIIV, LSIG…SGTL, LVAI…VTLM, and VLGV…AGLV.

The protein belongs to the UPF0756 family.

It is found in the cell membrane. The chain is UPF0756 membrane protein YeaL from Shigella boydii serotype 18 (strain CDC 3083-94 / BS512).